We begin with the raw amino-acid sequence, 351 residues long: Protein MSS2, mitochondrial (351 aa).

TPR repeat units lie at residues 155–188 (HLTVKLIGDLFFENKTYDKAEKYYQEFLKLENST) and 260–294 (KECFKTLGFLELNYFNNYERAKEWFKTGMEIMDLE).

As to quaternary structure, interacts with COX18.

It is found in the mitochondrion inner membrane. Its function is as follows. Required to stabilize mitochondrial cytochrome C oxidase subunit 2 (COX2) and to translocate the C-terminal domain of COX2 through the inner membrane. The protein is Protein MSS2, mitochondrial (MSS2) of Saccharomyces cerevisiae (strain ATCC 204508 / S288c) (Baker's yeast).